We begin with the raw amino-acid sequence, 121 residues long: Large ribosomal subunit protein bL12 (121 aa).

It belongs to the bacterial ribosomal protein bL12 family. As to quaternary structure, homodimer. Part of the ribosomal stalk of the 50S ribosomal subunit. Forms a multimeric L10(L12)X complex, where L10 forms an elongated spine to which 2 to 4 L12 dimers bind in a sequential fashion. Binds GTP-bound translation factors.

In terms of biological role, forms part of the ribosomal stalk which helps the ribosome interact with GTP-bound translation factors. Is thus essential for accurate translation. The polypeptide is Large ribosomal subunit protein bL12 (Clostridium perfringens (strain ATCC 13124 / DSM 756 / JCM 1290 / NCIMB 6125 / NCTC 8237 / Type A)).